The sequence spans 355 residues: Heat-inducible transcription repressor HrcA (355 aa).

The protein belongs to the HrcA family.

Negative regulator of class I heat shock genes (grpE-dnaK-dnaJ and groELS operons). Prevents heat-shock induction of these operons. In Nitratidesulfovibrio vulgaris (strain DSM 19637 / Miyazaki F) (Desulfovibrio vulgaris), this protein is Heat-inducible transcription repressor HrcA.